The sequence spans 187 residues: Segregation and condensation protein B (187 aa).

Belongs to the ScpB family. As to quaternary structure, homodimer. Homodimerization may be required to stabilize the binding of ScpA to the Smc head domains. Component of a cohesin-like complex composed of ScpA, ScpB and the Smc homodimer, in which ScpA and ScpB bind to the head domain of Smc. The presence of the three proteins is required for the association of the complex with DNA.

It is found in the cytoplasm. In terms of biological role, participates in chromosomal partition during cell division. May act via the formation of a condensin-like complex containing Smc and ScpA that pull DNA away from mid-cell into both cell halves. The chain is Segregation and condensation protein B from Agathobacter rectalis (strain ATCC 33656 / DSM 3377 / JCM 17463 / KCTC 5835 / VPI 0990) (Eubacterium rectale).